We begin with the raw amino-acid sequence, 685 residues long: Probable inactive leucine-rich repeat receptor-like protein kinase At1g66830 (685 aa).

The N-terminal stretch at 1-21 is a signal peptide; the sequence is MSQLFLILCFILTHFFAIATS. The Extracellular segment spans residues 22–305; it reads LNDQGLALLS…RRANHHSRLC (284 aa). Asparagine 38 and asparagine 48 each carry an N-linked (GlcNAc...) asparagine glycan. 8 LRR repeats span residues 65 to 89, 90 to 113, 115 to 136, 137 to 161, 162 to 185, 186 to 210, 212 to 234, and 235 to 260; these read DMRV…IGSL, LSLR…LFGL, GLQS…EIGS, LKSL…LIPC, KKLK…LGSN, LVHL…VGSL, NLKG…SLGN, and LPEL…VLLN. Asparagine 151 is a glycosylation site (N-linked (GlcNAc...) asparagine). Asparagine 193 carries N-linked (GlcNAc...) asparagine glycosylation. A glycan (N-linked (GlcNAc...) asparagine) is linked at asparagine 247. The chain crosses the membrane as a helical span at residues 306–326; that stretch reads IILTATGGTVAGIIFLASLFI. At 327–685 the chain is on the cytoplasmic side; that stretch reads YYLRKASARA…ESFEKLVTSI (359 aa). The Protein kinase domain maps to 397–682; the sequence is KASAFLLGKS…SVLESFEKLV (286 aa). Phosphoserine is present on residues serine 399, serine 480, and serine 590.

This sequence belongs to the protein kinase superfamily. Ser/Thr protein kinase family.

Its subcellular location is the cell membrane. The sequence is that of Probable inactive leucine-rich repeat receptor-like protein kinase At1g66830 from Arabidopsis thaliana (Mouse-ear cress).